A 512-amino-acid chain; its full sequence is Cytochrome P450 1A1 (512 aa).

The interval 29-40 (SRPQVPKGLKNP) is mitochondrial targeting signal. Ser-67 carries O-linked (GlcNAc) serine glycosylation. Phe-224 is a substrate binding site. Cys-457 lines the heme pocket.

This sequence belongs to the cytochrome P450 family. In terms of assembly, interacts with cytosolic chaperones HSP70 and HSP90; this interaction is required for initial targeting to mitochondria. Interacts (via mitochondrial targeting signal) with TOMM40 (via N-terminus); this interaction is required for translocation across the mitochondrial outer membrane. It depends on heme as a cofactor. In terms of tissue distribution, lung, lymphocytes and placenta.

The protein resides in the endoplasmic reticulum membrane. Its subcellular location is the mitochondrion inner membrane. It localises to the microsome membrane. It is found in the cytoplasm. The enzyme catalyses an organic molecule + reduced [NADPH--hemoprotein reductase] + O2 = an alcohol + oxidized [NADPH--hemoprotein reductase] + H2O + H(+). It carries out the reaction estrone + reduced [NADPH--hemoprotein reductase] + O2 = 2-hydroxyestrone + oxidized [NADPH--hemoprotein reductase] + H2O + H(+). The catalysed reaction is estrone + reduced [NADPH--hemoprotein reductase] + O2 = 4-hydroxyestrone + oxidized [NADPH--hemoprotein reductase] + H2O + H(+). It catalyses the reaction estrone + reduced [NADPH--hemoprotein reductase] + O2 = 6alpha-hydroxyestrone + oxidized [NADPH--hemoprotein reductase] + H2O + H(+). The enzyme catalyses estrone + reduced [NADPH--hemoprotein reductase] + O2 = 15alpha-hydroxyestrone + oxidized [NADPH--hemoprotein reductase] + H2O + H(+). It carries out the reaction estrone + reduced [NADPH--hemoprotein reductase] + O2 = 16alpha-hydroxyestrone + oxidized [NADPH--hemoprotein reductase] + H2O + H(+). The catalysed reaction is 17beta-estradiol + reduced [NADPH--hemoprotein reductase] + O2 = 2-hydroxy-17beta-estradiol + oxidized [NADPH--hemoprotein reductase] + H2O + H(+). It catalyses the reaction 17beta-estradiol + reduced [NADPH--hemoprotein reductase] + O2 = 4-hydroxy-17beta-estradiol + oxidized [NADPH--hemoprotein reductase] + H2O + H(+). The enzyme catalyses 17beta-estradiol + reduced [NADPH--hemoprotein reductase] + O2 = 6alpha-hydroxy-17beta-estradiol + oxidized [NADPH--hemoprotein reductase] + H2O + H(+). It carries out the reaction 17beta-estradiol + reduced [NADPH--hemoprotein reductase] + O2 = 7alpha-hydroxy-17beta-estradiol + oxidized [NADPH--hemoprotein reductase] + H2O + H(+). The catalysed reaction is 17beta-estradiol + reduced [NADPH--hemoprotein reductase] + O2 = 15alpha-hydroxy-17beta-estradiol + oxidized [NADPH--hemoprotein reductase] + H2O + H(+). It catalyses the reaction (5Z,8Z,11Z)-eicosatrienoate + reduced [NADPH--hemoprotein reductase] + O2 = 19-hydroxy-(5Z,8Z,11Z)-eicosatrienoate + oxidized [NADPH--hemoprotein reductase] + H2O + H(+). The enzyme catalyses (5Z,8Z,11Z,14Z)-eicosatetraenoate + reduced [NADPH--hemoprotein reductase] + O2 = 16-hydroxy-(5Z,8Z,11Z,14Z)-eicosatetraenoate + oxidized [NADPH--hemoprotein reductase] + H2O + H(+). It carries out the reaction (5Z,8Z,11Z,14Z)-eicosatetraenoate + reduced [NADPH--hemoprotein reductase] + O2 = 17-hydroxy-(5Z,8Z,11Z,14Z)-eicosatetraenoate + oxidized [NADPH--hemoprotein reductase] + H2O + H(+). The catalysed reaction is (5Z,8Z,11Z,14Z)-eicosatetraenoate + reduced [NADPH--hemoprotein reductase] + O2 = 18-hydroxy-(5Z,8Z,11Z,14Z)-eicosatetraenoate + oxidized [NADPH--hemoprotein reductase] + H2O + H(+). It catalyses the reaction (5Z,8Z,11Z,14Z)-eicosatetraenoate + reduced [NADPH--hemoprotein reductase] + O2 = 19-hydroxy-(5Z,8Z,11Z,14Z)-eicosatetraenoate + oxidized [NADPH--hemoprotein reductase] + H2O + H(+). The enzyme catalyses (5Z,8Z,11Z,14Z,17Z)-eicosapentaenoate + reduced [NADPH--hemoprotein reductase] + O2 = 19-hydroxy-(5Z,8Z,11Z,14Z,17Z)-eicosapentaenoate + oxidized [NADPH--hemoprotein reductase] + H2O + H(+). It carries out the reaction (5Z,8Z,11Z,14Z)-eicosatetraenoate + reduced [NADPH--hemoprotein reductase] + O2 = (8R,9S)-epoxy-(5Z,11Z,14Z)-eicosatrienoate + oxidized [NADPH--hemoprotein reductase] + H2O + H(+). The catalysed reaction is (5Z,8Z,11Z,14Z)-eicosatetraenoate + reduced [NADPH--hemoprotein reductase] + O2 = (11R,12S)-epoxy-(5Z,8Z,14Z)-eicosatrienoate + oxidized [NADPH--hemoprotein reductase] + H2O + H(+). It catalyses the reaction (5Z,8Z,11Z,14Z)-eicosatetraenoate + reduced [NADPH--hemoprotein reductase] + O2 = (14S,15R)-epoxy-(5Z,8Z,11Z)-eicosatrienoate + oxidized [NADPH--hemoprotein reductase] + H2O + H(+). The enzyme catalyses (5Z,8Z,11Z,14Z)-eicosatetraenoate + reduced [NADPH--hemoprotein reductase] + O2 = (14R,15S)-epoxy-(5Z,8Z,11Z)-eicosatrienoate + oxidized [NADPH--hemoprotein reductase] + H2O + H(+). It carries out the reaction (5Z,8Z,11Z,14Z,17Z)-eicosapentaenoate + reduced [NADPH--hemoprotein reductase] + O2 = (17R,18S)-epoxy-(5Z,8Z,11Z,14Z)-eicosatetraenoate + oxidized [NADPH--hemoprotein reductase] + H2O + H(+). The catalysed reaction is (4Z,7Z,10Z,13Z,16Z,19Z)-docosahexaenoate + reduced [NADPH--hemoprotein reductase] + O2 = (19S,20R)-epoxy-(4Z,7Z,10Z,13Z,16Z)-docosapentaenoate + oxidized [NADPH--hemoprotein reductase] + H2O + H(+). It catalyses the reaction (4Z,7Z,10Z,13Z,16Z,19Z)-docosahexaenoate + reduced [NADPH--hemoprotein reductase] + O2 = (19R,20S)-epoxy-(4Z,7Z,10Z,13Z,16Z)-docosapentaenoate + oxidized [NADPH--hemoprotein reductase] + H2O + H(+). The enzyme catalyses all-trans-retinol + reduced [NADPH--hemoprotein reductase] + O2 = all-trans-retinal + oxidized [NADPH--hemoprotein reductase] + 2 H2O + H(+). It carries out the reaction all-trans-retinal + reduced [NADPH--hemoprotein reductase] + O2 = all-trans-retinoate + oxidized [NADPH--hemoprotein reductase] + H2O + 2 H(+). The catalysed reaction is (13S)-hydroperoxy-(9Z,11E)-octadecadienoate = 13-oxo-(9Z,11E)-octadecadienoate + H2O. It catalyses the reaction (12S)-hydroperoxy-(5Z,8Z,10E,14Z)-eicosatetraenoate = 12-oxo-(5Z,8Z,10E,14Z)-eicosatetraenoate + H2O. The enzyme catalyses (15S)-hydroperoxy-(5Z,8Z,11Z,13E)-eicosatetraenoate = 15-oxo-(5Z,8Z,11Z,13E)-eicosatetraenoate + H2O. It carries out the reaction (5S)-hydroperoxy-(6E,8Z,11Z,14Z)-eicosatetraenoate = 5-oxo-(6E,8Z,11Z,14Z)-eicosatetraenoate + H2O. The protein operates within steroid hormone biosynthesis. It functions in the pathway lipid metabolism; fatty acid metabolism. Its pathway is cofactor metabolism; retinol metabolism. Its function is as follows. A cytochrome P450 monooxygenase involved in the metabolism of various endogenous substrates, including fatty acids, steroid hormones and vitamins. Mechanistically, uses molecular oxygen inserting one oxygen atom into a substrate, and reducing the second into a water molecule, with two electrons provided by NADPH via cytochrome P450 reductase (NADPH--hemoprotein reductase). Catalyzes the hydroxylation of carbon-hydrogen bonds. Exhibits high catalytic activity for the formation of hydroxyestrogens from estrone (E1) and 17beta-estradiol (E2), namely 2-hydroxy E1 and E2, as well as D-ring hydroxylated E1 and E2 at the C15-alpha and C16-alpha positions. Displays different regioselectivities for polyunsaturated fatty acids (PUFA) hydroxylation. Catalyzes the epoxidation of double bonds of certain PUFA. Converts arachidonic acid toward epoxyeicosatrienoic acid (EET) regioisomers, 8,9-, 11,12-, and 14,15-EET, that function as lipid mediators in the vascular system. Displays an absolute stereoselectivity in the epoxidation of eicosapentaenoic acid (EPA) producing the 17(R),18(S) enantiomer. May play an important role in all-trans retinoic acid biosynthesis in extrahepatic tissues. Catalyzes two successive oxidative transformation of all-trans retinol to all-trans retinal and then to the active form all-trans retinoic acid. May also participate in eicosanoids metabolism by converting hydroperoxide species into oxo metabolites (lipoxygenase-like reaction, NADPH-independent). This chain is Cytochrome P450 1A1, found in Homo sapiens (Human).